The primary structure comprises 301 residues: MNETKTIDVLDVKGKKAGSAELPGDLFDVNTNIPLIHQVVVAQLAAARQGTHATKTRGQVSGGGKKPWRQKGTGRARQGSTRAPQWVGGGTVHGPQPRSYAQRTPKKMVGAALRGALSDMARDNRIFVVTSLVDGDKPSTKQAKAVLSGLAELRKVLVVLDRSDEIDWLSVRNLSEVHVLAADQLNTYDVVNARTIVFSQAGLDAFVGARSANTQALSAQPEVPETNVADQHPYGEDSFRGDNPPAGFDIKGNEDSMKFHEPSSPWYGRTIAEVWFRSAAAAEAAGFVNAVKSDSEKEDAK.

A large ribosomal subunit protein uL4 region spans residues 1-223 (MNETKTIDVL…TQALSAQPEV (223 aa)). The segment at 49-105 (QGTHATKTRGQVSGGGKKPWRQKGTGRARQGSTRAPQWVGGGTVHGPQPRSYAQRTP) is disordered. Residues 224-301 (PETNVADQHP…KSDSEKEDAK (78 aa)) are unknown.

The protein belongs to the universal ribosomal protein uL4 family. Part of the 50S ribosomal subunit.

Its function is as follows. One of the primary rRNA binding proteins, this protein initially binds near the 5'-end of the 23S rRNA. It is important during the early stages of 50S assembly. It makes multiple contacts with different domains of the 23S rRNA in the assembled 50S subunit and ribosome. Forms part of the polypeptide exit tunnel. The sequence is that of Large ribosomal subunit protein uL4 from Cutibacterium acnes (strain DSM 16379 / KPA171202) (Propionibacterium acnes).